Reading from the N-terminus, the 1676-residue chain is Protein TIC 214 (1676 aa).

The next 6 membrane-spanning stretches (helical) occupy residues 23-43, 71-91, 96-116, 145-165, 179-199, and 226-246; these read AGPL…PIAP, GILI…FLSI, LYMI…YMFF, AFLD…SPVM, VSLF…MFVL, and IFPP…PVSF.

Belongs to the TIC214 family. Part of the Tic complex.

Its subcellular location is the plastid. The protein localises to the chloroplast inner membrane. Functionally, involved in protein precursor import into chloroplasts. May be part of an intermediate translocation complex acting as a protein-conducting channel at the inner envelope. The protein is Protein TIC 214 of Zygnema circumcarinatum (Green alga).